We begin with the raw amino-acid sequence, 791 residues long: AP-1 complex subunit gamma-like 2 (791 aa).

One can recognise a GAE domain in the interval 671 to 786; sequence APIPSVRVFE…QEIFEVDNLP (116 aa).

Belongs to the adaptor complexes large subunit family. May interact with AP1S1/Sigma1A-adaptin and AP1S2/Sigma1B-adaptin. Probably does not interact with APB1. Interacts (via GAE domain) with RABEP1, NECAP1, CLINT1 and AFTPH/aftiphilin. Interacts with HBV major surface antigen L. Interacts with HBV core protein C in a ubiquitin-dependent manner. Binds ubiquitin. Widely expressed.

The protein resides in the golgi apparatus membrane. It localises to the cytoplasmic vesicle membrane. It is found in the endosome membrane. In terms of biological role, may function in protein sorting in late endosomes or multivesucular bodies (MVBs). Involved in MVB-assisted maturation of hepatitis B virus (HBV). This chain is AP-1 complex subunit gamma-like 2 (Ap1g2), found in Mus musculus (Mouse).